A 173-amino-acid polypeptide reads, in one-letter code: Cell division protein SepF (173 aa).

Positions S17–H85 are disordered. Residues S35–A52 are compositionally biased toward low complexity.

It belongs to the SepF family. As to quaternary structure, homodimer. Interacts with FtsZ.

The protein localises to the cytoplasm. Cell division protein that is part of the divisome complex and is recruited early to the Z-ring. Probably stimulates Z-ring formation, perhaps through the cross-linking of FtsZ protofilaments. Its function overlaps with FtsA. In Kocuria rhizophila (strain ATCC 9341 / DSM 348 / NBRC 103217 / DC2201), this protein is Cell division protein SepF.